An 865-amino-acid chain; its full sequence is Adenylate cyclase (865 aa).

The catalytic stretch occupies residues 1-540 (MYLYIETLKQ…DISSHFPIRL (540 aa)). A regulatory region spans residues 546 to 865 (KALYSPCEIR…FNDYQAVHHH (320 aa)).

This sequence belongs to the adenylyl cyclase class-1 family.

Its subcellular location is the cytoplasm. The enzyme catalyses ATP = 3',5'-cyclic AMP + diphosphate. In Proteus mirabilis, this protein is Adenylate cyclase (cya).